Reading from the N-terminus, the 492-residue chain is Probable glycine dehydrogenase (decarboxylating) subunit 2 (492 aa).

Residue Lys274 is modified to N6-(pyridoxal phosphate)lysine.

This sequence belongs to the GcvP family. C-terminal subunit subfamily. The glycine cleavage system is composed of four proteins: P, T, L and H. In this organism, the P 'protein' is a heterodimer of two subunits. Requires pyridoxal 5'-phosphate as cofactor.

It carries out the reaction N(6)-[(R)-lipoyl]-L-lysyl-[glycine-cleavage complex H protein] + glycine + H(+) = N(6)-[(R)-S(8)-aminomethyldihydrolipoyl]-L-lysyl-[glycine-cleavage complex H protein] + CO2. In terms of biological role, the glycine cleavage system catalyzes the degradation of glycine. The P protein binds the alpha-amino group of glycine through its pyridoxal phosphate cofactor; CO(2) is released and the remaining methylamine moiety is then transferred to the lipoamide cofactor of the H protein. The protein is Probable glycine dehydrogenase (decarboxylating) subunit 2 of Staphylococcus haemolyticus (strain JCSC1435).